The chain runs to 587 residues: GATA zinc finger domain-containing protein 3 (587 aa).

Low complexity predominate over residues 53 to 74; that stretch reads NINNNINNNNNNNNNNNNNNIN. Disordered stretches follow at residues 53–141, 179–294, and 312–392; these read NINN…LKIP, QLAH…SSPS, and QTSP…ATIN. Residues 75-86 are compositionally biased toward polar residues; the sequence is QYHQNHYDQYSD. Composition is skewed to low complexity over residues 87–136, 183–202, 237–264, 272–292, and 316–333; these read NNCN…NNNN, NSSMPNSPTSSNISPSTPTS, NINGNHHNNNNNINNNINNNVNNNINNG, GNNNNNNNIGVNGSGSSNSSS, and SQQSQQQQQQQQQQQQSQ. Polar residues-rich tracts occupy residues 340–358 and 365–379; these read INTTEIHQRSNPSSATNSP and NESSVENSPFTTPLS. A GATA-type zinc finger spans residues 500-525; that stretch reads CIFCGTMETPEWRKGPGGHKTLCNAC. Residues 536–587 are disordered; sequence ENQNNGGSPNPQQNNVTTTTTTTTSTSTNSPNSNGNNFSPESAMSVSKLISD. Positions 538–575 are enriched in low complexity; that stretch reads QNNGGSPNPQQNNVTTTTTTTTSTSTNSPNSNGNNFSP. Over residues 577-587 the composition is skewed to polar residues; it reads SAMSVSKLISD.

The polypeptide is GATA zinc finger domain-containing protein 3 (gtaC) (Dictyostelium discoideum (Social amoeba)).